The sequence spans 120 residues: Large ribosomal subunit protein uL18 (120 aa).

The protein belongs to the universal ribosomal protein uL18 family. As to quaternary structure, part of the 50S ribosomal subunit; part of the 5S rRNA/L5/L18/L25 subcomplex. Contacts the 5S and 23S rRNAs.

Functionally, this is one of the proteins that bind and probably mediate the attachment of the 5S RNA into the large ribosomal subunit, where it forms part of the central protuberance. This Brucella anthropi (strain ATCC 49188 / DSM 6882 / CCUG 24695 / JCM 21032 / LMG 3331 / NBRC 15819 / NCTC 12168 / Alc 37) (Ochrobactrum anthropi) protein is Large ribosomal subunit protein uL18.